We begin with the raw amino-acid sequence, 352 residues long: Phenylalanine--tRNA ligase alpha subunit (352 aa).

Position 258 (Glu258) interacts with Mg(2+).

It belongs to the class-II aminoacyl-tRNA synthetase family. Phe-tRNA synthetase alpha subunit type 1 subfamily. In terms of assembly, tetramer of two alpha and two beta subunits. It depends on Mg(2+) as a cofactor.

It localises to the cytoplasm. It catalyses the reaction tRNA(Phe) + L-phenylalanine + ATP = L-phenylalanyl-tRNA(Phe) + AMP + diphosphate + H(+). This Staphylococcus haemolyticus (strain JCSC1435) protein is Phenylalanine--tRNA ligase alpha subunit.